The sequence spans 1704 residues: Villidin (1704 aa).

4 WD repeats span residues 82 to 122 (GHTD…LIKD), 133 to 173 (KQQK…EQSS), 180 to 221 (GHED…TPIQ), and 225 to 271 (THEG…SSQP). Disordered stretches follow at residues 439-460 (IGNS…DSPF) and 606-721 (SVPS…NSST). The span at 442–456 (SGSGGGGGDGDGNGG) shows a compositional bias: gly residues. Residues 459–563 (PFITEGIVKQ…WCQSINAYRE (105 aa)) enclose the PH 1 domain. Low complexity-rich tracts occupy residues 613-636 (QQQQ…TPTQ), 651-701 (SLKS…SSSS), and 709-721 (NNST…NSST). PH domains follow at residues 727 to 828 (DIVI…QNLK) and 871 to 969 (EQPL…AARK). A disordered region spans residues 848–877 (LISSPMSDDESNTNEGGVEEEEEEQPLEGQ). Residues 854–873 (SDDESNTNEGGVEEEEEEQP) show a composition bias toward acidic residues. Gelsolin-like repeat units lie at residues 1025 to 1119 (KQKI…LGGN), 1138 to 1241 (IKTT…FANY), 1293 to 1390 (GRVK…FKTK), 1404 to 1494 (KKPS…FEST), and 1520 to 1615 (RFFV…FRAW). An HP domain is found at 1641-1704 (DYLKEIYTYE…EGIKKELFLF (64 aa)).

The protein localises to the membrane. Its subcellular location is the cytoplasm. It is found in the cytoskeleton. May function as a linker between membranes and the actin cytoskeleton. This Dictyostelium discoideum (Social amoeba) protein is Villidin (vilA).